The primary structure comprises 1907 residues: Receptor-type tyrosine-protein phosphatase F (1907 aa).

Residues 1-29 (MAPEPAPGRTMVPLVPALVMLGLVAGAHG) form the signal peptide. Residues 30 to 1263 (DSKPVFIKVP…QQQEEPEMLW (1234 aa)) lie on the Extracellular side of the membrane. 3 Ig-like C2-type domains span residues 33–123 (PVFI…AKLS), 135–224 (PSID…ANLY), and 232–314 (PRFS…AQVT). Cys-54 and Cys-107 are oxidised to a cystine. 68–77 (KKGKKVSSQR) contributes to the heparin binding site. An N-linked (GlcNAc...) asparagine glycan is attached at Asn-117. A disulfide bridge links Cys-156 with Cys-207. Residues Asn-250 and Asn-295 are each glycosylated (N-linked (GlcNAc...) asparagine). The cysteines at positions 253 and 298 are disulfide-linked. Fibronectin type-III domains lie at 321–411 (PPID…TGEQ), 416–510 (PPRR…TQQG), 514–604 (QPAD…TAQS), 609–706 (PPQK…TDED), 711–819 (PPRK…TTGA), 820–914 (VPGR…PEDL), 918–1010 (FPQN…TMPV), and 1014–1098 (FAKN…TAPD). Positions 398–417 (GPPSEAVRARTGEQAPSSPP) are disordered. Residues 693–712 (GPESSPVLVRTDEDVPSGPP) form a disordered region. N-linked (GlcNAc...) asparagine glycosylation is present at Asn-721. Residue Asn-966 is glycosylated (N-linked (GlcNAc...) asparagine). Residues 1264–1284 (VTGPVLAVILIILIVIAILLF) form a helical membrane-spanning segment. Topologically, residues 1285-1907 (KRKRTHSPSS…YLGSFDHYAT (623 aa)) are cytoplasmic. Position 1305 is a phosphoserine (Ser-1305). Tyrosine-protein phosphatase domains follow at residues 1352-1607 (FSQE…LLEA) and 1639-1898 (MELE…ALEY). Substrate-binding positions include Asp-1516, 1548–1554 (CSAGVGR), and Gln-1592. The Phosphocysteine intermediate role is filled by Cys-1548. The active-site Phosphocysteine intermediate is the Cys-1839.

The protein belongs to the protein-tyrosine phosphatase family. Receptor class 2A subfamily. In terms of assembly, interacts with GRIP1. Interacts with PPFIA1, PPFIA2 and PPFIA3. Interacts with INSR.

Its subcellular location is the membrane. It carries out the reaction O-phospho-L-tyrosyl-[protein] + H2O = L-tyrosyl-[protein] + phosphate. Functionally, possible cell adhesion receptor. It possesses an intrinsic protein tyrosine phosphatase activity (PTPase) and dephosphorylates EPHA2 regulating its activity. Its function is as follows. The first PTPase domain has enzymatic activity, while the second one seems to affect the substrate specificity of the first one. The polypeptide is Receptor-type tyrosine-protein phosphatase F (PTPRF) (Homo sapiens (Human)).